A 199-amino-acid polypeptide reads, in one-letter code: Molybdenum cofactor guanylyltransferase (199 aa).

GTP contacts are provided by residues 12–14 (LAG), Lys25, Asn53, Asp71, and Asp101. Asp101 lines the Mg(2+) pocket.

This sequence belongs to the MobA family. As to quaternary structure, monomer. Mg(2+) is required as a cofactor.

The protein resides in the cytoplasm. The catalysed reaction is Mo-molybdopterin + GTP + H(+) = Mo-molybdopterin guanine dinucleotide + diphosphate. Functionally, transfers a GMP moiety from GTP to Mo-molybdopterin (Mo-MPT) cofactor (Moco or molybdenum cofactor) to form Mo-molybdopterin guanine dinucleotide (Mo-MGD) cofactor. The protein is Molybdenum cofactor guanylyltransferase of Cupriavidus necator (strain ATCC 17699 / DSM 428 / KCTC 22496 / NCIMB 10442 / H16 / Stanier 337) (Ralstonia eutropha).